Consider the following 240-residue polypeptide: Uridylate kinase (240 aa).

Residue 12–15 coordinates ATP; that stretch reads KLSG. An involved in allosteric activation by GTP region spans residues 20-25; the sequence is GDQGYG. A UMP-binding site is contributed by Gly-54. The ATP site is built by Gly-55 and Arg-59. UMP is bound by residues Asp-74 and 135–142; that span reads TGNPYFST. Residues Asn-163, Tyr-169, and Asp-172 each contribute to the ATP site.

Belongs to the UMP kinase family. Homohexamer.

It is found in the cytoplasm. The enzyme catalyses UMP + ATP = UDP + ADP. It participates in pyrimidine metabolism; CTP biosynthesis via de novo pathway; UDP from UMP (UMPK route): step 1/1. Its activity is regulated as follows. Allosterically activated by GTP. Inhibited by UTP. Its function is as follows. Catalyzes the reversible phosphorylation of UMP to UDP. This is Uridylate kinase from Oceanobacillus iheyensis (strain DSM 14371 / CIP 107618 / JCM 11309 / KCTC 3954 / HTE831).